The chain runs to 712 residues: DNA ligase (712 aa).

Low complexity predominate over residues 1 to 22 (MSTQYDSDSSPAASNSGSADPA). The tract at residues 1–23 (MSTQYDSDSSPAASNSGSADPAL) is disordered. NAD(+) is bound at residue 53–57 (DAEFD). The disordered stretch occupies residues 69–93 (SHPEAVTGPSPTTEVAPSPPESSPF). Residues 104 to 105 (SL) and glutamate 129 each bind NAD(+). Catalysis depends on lysine 131, which acts as the N6-AMP-lysine intermediate. The NAD(+) site is built by arginine 152, glutamate 192, lysine 308, and lysine 332. Cysteine 426, cysteine 429, cysteine 445, and cysteine 451 together coordinate Zn(2+). The 89-residue stretch at 624 to 712 (IQADLLAGLS…GPGKGDAEED (89 aa)) folds into the BRCT domain.

Belongs to the NAD-dependent DNA ligase family. LigA subfamily. The cofactor is Mg(2+). Mn(2+) is required as a cofactor.

The catalysed reaction is NAD(+) + (deoxyribonucleotide)n-3'-hydroxyl + 5'-phospho-(deoxyribonucleotide)m = (deoxyribonucleotide)n+m + AMP + beta-nicotinamide D-nucleotide.. Its function is as follows. DNA ligase that catalyzes the formation of phosphodiester linkages between 5'-phosphoryl and 3'-hydroxyl groups in double-stranded DNA using NAD as a coenzyme and as the energy source for the reaction. It is essential for DNA replication and repair of damaged DNA. This is DNA ligase from Corynebacterium urealyticum (strain ATCC 43042 / DSM 7109).